We begin with the raw amino-acid sequence, 429 residues long: GTPase Obg (429 aa).

An Obg domain is found at 1-158 (MLIDKCTLFL…IEAQFELKYI (158 aa)). Positions 159-330 (ADVGLLGLPN…LLKDIFKDYK (172 aa)) constitute an OBG-type G domain. GTP contacts are provided by residues 165 to 172 (GLPNAGKS), 190 to 194 (FTTLS), 211 to 214 (DIPG), 281 to 284 (NKID), and 311 to 313 (SGF). The Mg(2+) site is built by Ser172 and Thr192. An OCT domain is found at 351-429 (KVEKEQEDIV…RIQDVMFEIN (79 aa)).

The protein belongs to the TRAFAC class OBG-HflX-like GTPase superfamily. OBG GTPase family. In terms of assembly, monomer. It depends on Mg(2+) as a cofactor.

The protein localises to the cytoplasm. In terms of biological role, an essential GTPase which binds GTP, GDP and possibly (p)ppGpp with moderate affinity, with high nucleotide exchange rates and a fairly low GTP hydrolysis rate. Plays a role in control of the cell cycle, stress response, ribosome biogenesis and in those bacteria that undergo differentiation, in morphogenesis control. The sequence is that of GTPase Obg from Malacoplasma penetrans (strain HF-2) (Mycoplasma penetrans).